The sequence spans 223 residues: NAD(P)H-hydrate epimerase (223 aa).

A YjeF N-terminal domain is found at 9–209 (MQKIDTYTVN…DIGLLTPPDF (201 aa)). Position 57–61 (57–61 (NNGAD)) interacts with (6S)-NADPHX. 2 residues coordinate K(+): N58 and D119. Residues 123–129 (GTGLNNL) and D152 contribute to the (6S)-NADPHX site. Residue T155 coordinates K(+).

This sequence belongs to the NnrE/AIBP family. K(+) is required as a cofactor.

The catalysed reaction is (6R)-NADHX = (6S)-NADHX. The enzyme catalyses (6R)-NADPHX = (6S)-NADPHX. In terms of biological role, catalyzes the epimerization of the S- and R-forms of NAD(P)HX, a damaged form of NAD(P)H that is a result of enzymatic or heat-dependent hydration. This is a prerequisite for the S-specific NAD(P)H-hydrate dehydratase to allow the repair of both epimers of NAD(P)HX. The protein is NAD(P)H-hydrate epimerase of Leuconostoc gelidum subsp. gasicomitatum (strain DSM 15947 / CCUG 46042 / CECT 5767 / JCM 12535 / LMG 18811 / NBRC 113245 / TB1-10) (Leuconostoc gasicomitatum).